A 695-amino-acid polypeptide reads, in one-letter code: U1 snRNP-associated protein usp107 (695 aa).

A compositionally biased stretch (basic and acidic residues) spans 85 to 96 (RDNESQQKDRKN). The interval 85–134 (RDNESQQKDRKNLPRNQKSNEIQEKQTFQTPSSEKSTTERESRPFVPPNS) is disordered. Residues 98–113 (PRNQKSNEIQEKQTFQ) are compositionally biased toward polar residues. An RRM domain is found at 139-221 (RMLFIGNIPK…PSTRLSLITD (83 aa)). A coiled-coil region spans residues 265–369 (DVRSRIERAA…NLLSKHRISR (105 aa)). Composition is skewed to basic and acidic residues over residues 487 to 506 (EEDADALDRKEEERELRTRG) and 548 to 561 (SERREFGLPERLLL). 2 disordered regions span residues 487–509 (EEDADALDRKEEERELRTRGEGA) and 540–590 (QTKK…AEKT). The PWI domain occupies 605 to 695 (ESLWALPIDW…HVLLILRSEA (91 aa)).

As to quaternary structure, component of the U1 snRNP particle, a subcomplex of the spliceosome. Interacts with prp5 and usp102.

The protein localises to the cytoplasm. It localises to the nucleus. In terms of biological role, component of the U1 snRNP particle, which recognizes and binds the 5'-splice site of pre-mRNA. Together with other non-snRNP factors, U1 snRNP forms the spliceosomal commitment complex, that targets pre-mRNA to the splicing pathway. This Schizosaccharomyces pombe (strain 972 / ATCC 24843) (Fission yeast) protein is U1 snRNP-associated protein usp107 (usp107).